The primary structure comprises 465 residues: Probable glucan endo-1,3-beta-glucosidase eglC (465 aa).

An N-terminal signal peptide occupies residues 1-19; that stretch reads MFTKTQILALALSIASAEA. Residue Glu128 is the Proton donor of the active site. The N-linked (GlcNAc...) asparagine glycan is linked to Asn183. Glu239 (nucleophile) is an active-site residue. Asn318 is a glycosylation site (N-linked (GlcNAc...) asparagine). Composition is skewed to low complexity over residues 320–333 and 380–438; these read SSAS…SAQS and SPSA…ATPA. Disordered stretches follow at residues 320 to 356 and 380 to 440; these read SSAS…GHGG and SPSA…PADF. Gly442 is lipidated: GPI-anchor amidated glycine. Positions 443–465 are cleaved as a propeptide — removed in mature form; the sequence is AGSRLSGSIFGAAMLVAALAVAL.

The protein belongs to the glycosyl hydrolase 17 family. The GPI-anchor is attached to the protein in the endoplasmic reticulum and serves to target the protein to the cell surface. There, the glucosamine-inositol phospholipid moiety is cleaved off and the GPI-modified mannoprotein is covalently attached via its lipidless GPI glycan remnant to the 1,6-beta-glucan of the outer cell wall layer.

The protein localises to the cell membrane. It is found in the secreted. The protein resides in the cell wall. It catalyses the reaction Hydrolysis of (1-&gt;3)-beta-D-glucosidic linkages in (1-&gt;3)-beta-D-glucans.. In terms of biological role, glucanases play a role in cell expansion during growth, in cell-cell fusion during mating, and in spore release during sporulation. This enzyme may be involved in beta-glucan degradation and also function biosynthetically as a transglycosylase. The protein is Probable glucan endo-1,3-beta-glucosidase eglC (eglC) of Emericella nidulans (strain FGSC A4 / ATCC 38163 / CBS 112.46 / NRRL 194 / M139) (Aspergillus nidulans).